An 85-amino-acid polypeptide reads, in one-letter code: Phosphocarrier protein HPr (85 aa).

An HPr domain is found at 1–85 (MYSKDVEIIA…HLVALIPTLE (85 aa)). The active-site Pros-phosphohistidine intermediate is the H15.

It belongs to the HPr family.

It localises to the cytoplasm. In terms of biological role, general (non sugar-specific) component of the phosphoenolpyruvate-dependent sugar phosphotransferase system (sugar PTS). This major carbohydrate active-transport system catalyzes the phosphorylation of incoming sugar substrates concomitantly with their translocation across the cell membrane. The phosphoryl group from phosphoenolpyruvate (PEP) is transferred to the phosphoryl carrier protein HPr by enzyme I. Phospho-HPr then transfers it to the PTS EIIA domain. This Haemophilus influenzae (strain ATCC 51907 / DSM 11121 / KW20 / Rd) protein is Phosphocarrier protein HPr (ptsH).